The primary structure comprises 213 residues: Uridine kinase (213 aa).

15 to 22 (GASASGKS) lines the ATP pocket.

It belongs to the uridine kinase family.

The protein resides in the cytoplasm. It catalyses the reaction uridine + ATP = UMP + ADP + H(+). The enzyme catalyses cytidine + ATP = CMP + ADP + H(+). It functions in the pathway pyrimidine metabolism; CTP biosynthesis via salvage pathway; CTP from cytidine: step 1/3. Its pathway is pyrimidine metabolism; UMP biosynthesis via salvage pathway; UMP from uridine: step 1/1. The chain is Uridine kinase from Enterobacter sp. (strain 638).